A 221-amino-acid polypeptide reads, in one-letter code: Thymidylate kinase (221 aa).

Residue 11–18 (GPDGAGKT) coordinates ATP.

It belongs to the thymidylate kinase family.

The catalysed reaction is dTMP + ATP = dTDP + ADP. Phosphorylation of dTMP to form dTDP in both de novo and salvage pathways of dTTP synthesis. This is Thymidylate kinase from Lactiplantibacillus plantarum (strain ATCC BAA-793 / NCIMB 8826 / WCFS1) (Lactobacillus plantarum).